A 118-amino-acid chain; its full sequence is Small ribosomal subunit protein uS13 (118 aa).

The tract at residues 94–118 is disordered; sequence GLPVHGQRTKTNARTRKGPAKSITR.

The protein belongs to the universal ribosomal protein uS13 family. In terms of assembly, part of the 30S ribosomal subunit. Forms a loose heterodimer with protein S19. Forms two bridges to the 50S subunit in the 70S ribosome.

Its function is as follows. Located at the top of the head of the 30S subunit, it contacts several helices of the 16S rRNA. In the 70S ribosome it contacts the 23S rRNA (bridge B1a) and protein L5 of the 50S subunit (bridge B1b), connecting the 2 subunits; these bridges are implicated in subunit movement. Contacts the tRNAs in the A and P-sites. The protein is Small ribosomal subunit protein uS13 of Acidithiobacillus ferrooxidans (strain ATCC 23270 / DSM 14882 / CIP 104768 / NCIMB 8455) (Ferrobacillus ferrooxidans (strain ATCC 23270)).